A 377-amino-acid polypeptide reads, in one-letter code: tRNA-specific 2-thiouridylase MnmA (377 aa).

ATP-binding positions include 16-23 (GMSGGVDS) and Met-42. Residues 102 to 104 (NPD) are interaction with target base in tRNA. The active-site Nucleophile is the Cys-107. A disulfide bridge links Cys-107 with Cys-204. Gly-131 serves as a coordination point for ATP. The interaction with tRNA stretch occupies residues 154–156 (KDQ). Cys-204 acts as the Cysteine persulfide intermediate in catalysis. The interaction with tRNA stretch occupies residues 315–316 (RY).

The protein belongs to the MnmA/TRMU family.

It is found in the cytoplasm. The enzyme catalyses S-sulfanyl-L-cysteinyl-[protein] + uridine(34) in tRNA + AH2 + ATP = 2-thiouridine(34) in tRNA + L-cysteinyl-[protein] + A + AMP + diphosphate + H(+). Catalyzes the 2-thiolation of uridine at the wobble position (U34) of tRNA, leading to the formation of s(2)U34. This chain is tRNA-specific 2-thiouridylase MnmA, found in Lacticaseibacillus paracasei (strain ATCC 334 / BCRC 17002 / CCUG 31169 / CIP 107868 / KCTC 3260 / NRRL B-441) (Lactobacillus paracasei).